The following is a 294-amino-acid chain: Ribosomal RNA small subunit methyltransferase I (294 aa).

Belongs to the methyltransferase superfamily. RsmI family.

It localises to the cytoplasm. It carries out the reaction cytidine(1402) in 16S rRNA + S-adenosyl-L-methionine = 2'-O-methylcytidine(1402) in 16S rRNA + S-adenosyl-L-homocysteine + H(+). Catalyzes the 2'-O-methylation of the ribose of cytidine 1402 (C1402) in 16S rRNA. This chain is Ribosomal RNA small subunit methyltransferase I, found in Mesorhizobium japonicum (strain LMG 29417 / CECT 9101 / MAFF 303099) (Mesorhizobium loti (strain MAFF 303099)).